The following is a 30-amino-acid chain: Trypsin inhibitor 1 (30 aa).

Intrachain disulfides connect Cys4–Cys21, Cys11–Cys23, and Cys17–Cys29.

This sequence belongs to the protease inhibitor I7 (squash-type serine protease inhibitor) family.

It is found in the secreted. In terms of biological role, inhibits trypsin. The polypeptide is Trypsin inhibitor 1 (Citrullus lanatus (Watermelon)).